A 98-amino-acid polypeptide reads, in one-letter code: C-X-C motif chemokine 10 (98 aa).

A signal peptide spans 1–21; it reads MNPSAAVIFCLILLGLSGTQG. At arginine 26 the chain carries Citrulline. Intrachain disulfides connect cysteine 30–cysteine 57 and cysteine 32–cysteine 74.

This sequence belongs to the intercrine alpha (chemokine CxC) family. As to quaternary structure, monomer, dimer, and tetramer. Interacts with CXCR3 (via N-terminus). Expressed in the spleen, thymus, lymph nodes and liver. Expressed in astrocytes, microglia, and neurons.

It is found in the secreted. Pro-inflammatory cytokine that is involved in a wide variety of processes such as chemotaxis, differentiation, and activation of peripheral immune cells, regulation of cell growth, apoptosis and modulation of angiostatic effects. Plays thereby an important role during viral infections by stimulating the activation and migration of immune cells to the infected sites. Mechanistically, binding of CXCL10 to the CXCR3 receptor activates G protein-mediated signaling and results in downstream activation of phospholipase C-dependent pathway, an increase in intracellular calcium production and actin reorganization. In turn, recruitment of activated Th1 lymphocytes occurs at sites of inflammation. Activation of the CXCL10/CXCR3 axis also plays an important role in neurons in response to brain injury for activating microglia, the resident macrophage population of the central nervous system, and directing them to the lesion site. This recruitment is an essential element for neuronal reorganization. The sequence is that of C-X-C motif chemokine 10 (Cxcl10) from Mus musculus (Mouse).